The chain runs to 194 residues: Dof zinc finger protein DOF4.2 (194 aa).

The segment at 21–75 adopts a Dof-type zinc-finger fold; the sequence is RVCPRCYSDQTRFSYFNNNKKSQPRYKCKNCCRCWTHGGVLRNIPVTGICDKSNL. The Zn(2+) site is built by cysteine 23, cysteine 26, cysteine 48, and cysteine 51.

The protein localises to the nucleus. Functionally, transcription factor that binds specifically to a 5'-AA[AG]G-3' consensus core sequence. This chain is Dof zinc finger protein DOF4.2 (DOF4.2), found in Arabidopsis thaliana (Mouse-ear cress).